A 197-amino-acid polypeptide reads, in one-letter code: Peptide deformylase (197 aa).

Residues Cys106 and His148 each contribute to the Fe cation site. The active site involves Glu149. Position 152 (His152) interacts with Fe cation.

Belongs to the polypeptide deformylase family. Requires Fe(2+) as cofactor.

It catalyses the reaction N-terminal N-formyl-L-methionyl-[peptide] + H2O = N-terminal L-methionyl-[peptide] + formate. Removes the formyl group from the N-terminal Met of newly synthesized proteins. Requires at least a dipeptide for an efficient rate of reaction. N-terminal L-methionine is a prerequisite for activity but the enzyme has broad specificity at other positions. The sequence is that of Peptide deformylase from Mycobacterium ulcerans (strain Agy99).